The following is a 341-amino-acid chain: Methionine import ATP-binding protein MetN (341 aa).

The 239-residue stretch at I9 to F247 folds into the ABC transporter domain. ATP is bound at residue G41–T48.

The protein belongs to the ABC transporter superfamily. Methionine importer (TC 3.A.1.24) family. As to quaternary structure, the complex is composed of two ATP-binding proteins (MetN), two transmembrane proteins (MetI) and a solute-binding protein (MetQ).

The protein resides in the cell inner membrane. The catalysed reaction is L-methionine(out) + ATP + H2O = L-methionine(in) + ADP + phosphate + H(+). It carries out the reaction D-methionine(out) + ATP + H2O = D-methionine(in) + ADP + phosphate + H(+). Its function is as follows. Part of the ABC transporter complex MetNIQ involved in methionine import. Responsible for energy coupling to the transport system. This is Methionine import ATP-binding protein MetN from Chlamydia pneumoniae (Chlamydophila pneumoniae).